A 158-amino-acid chain; its full sequence is 2-C-methyl-D-erythritol 2,4-cyclodiphosphate synthase (158 aa).

Positions 8 and 10 each coordinate a divalent metal cation. 4-CDP-2-C-methyl-D-erythritol 2-phosphate is bound by residues Asp8 to His10 and His34 to Ser35. An a divalent metal cation-binding site is contributed by His42. 4-CDP-2-C-methyl-D-erythritol 2-phosphate is bound by residues Asp56–Gly58, Phe61–Asp65, Thr132–Glu135, and Phe139.

This sequence belongs to the IspF family. In terms of assembly, homotrimer. Requires a divalent metal cation as cofactor.

It carries out the reaction 4-CDP-2-C-methyl-D-erythritol 2-phosphate = 2-C-methyl-D-erythritol 2,4-cyclic diphosphate + CMP. The protein operates within isoprenoid biosynthesis; isopentenyl diphosphate biosynthesis via DXP pathway; isopentenyl diphosphate from 1-deoxy-D-xylulose 5-phosphate: step 4/6. Involved in the biosynthesis of isopentenyl diphosphate (IPP) and dimethylallyl diphosphate (DMAPP), two major building blocks of isoprenoid compounds. Catalyzes the conversion of 4-diphosphocytidyl-2-C-methyl-D-erythritol 2-phosphate (CDP-ME2P) to 2-C-methyl-D-erythritol 2,4-cyclodiphosphate (ME-CPP) with a corresponding release of cytidine 5-monophosphate (CMP). This Natranaerobius thermophilus (strain ATCC BAA-1301 / DSM 18059 / JW/NM-WN-LF) protein is 2-C-methyl-D-erythritol 2,4-cyclodiphosphate synthase.